A 73-amino-acid polypeptide reads, in one-letter code: MAAKTSNLVALLLSLFLLLLSISSQVGLGEAKRNLRNNLRLDCVSHPSPPPPHRSMAPPIFVPPSTSHKGQGP.

The N-terminal stretch at 1–31 is a signal peptide; that stretch reads MAAKTSNLVALLLSLFLLLLSISSQVGLGEA. A disordered region spans residues 44–73; sequence VSHPSPPPPHRSMAPPIFVPPSTSHKGQGP. The short motif at 59-73 is the SCOOP motif element; it reads PIFVPPSTSHKGQGP. Residues 64-73 show a composition bias toward polar residues; sequence PSTSHKGQGP. Residues 65 to 67 carry the SxS motif essential for MIK2 binding motif; the sequence is STS.

This sequence belongs to the serine rich endogenous peptide (SCOOP) phytocytokine family. In terms of assembly, interacts with MIK2 (via extracellular leucine-rich repeat domain); this interaction triggers the formation of complex between MIK2 and the BAK1/SERK3 and SERK4 coreceptors, and subsequent BAK1 activation by phosphorylation. In terms of tissue distribution, mostly expressed in seedlings shoots and leaves, and, to a lower extent, in roots, stems, siliques, seeds and flowers.

Its subcellular location is the cell membrane. The protein resides in the secreted. It is found in the extracellular space. The protein localises to the apoplast. Its function is as follows. Brassicaceae-specific phytocytokine (plant endogenous peptide released into the apoplast) perceived by MIK2 in a BAK1/SERK3 and SERK4 coreceptors-dependent manner, that modulates various physiological and antimicrobial processes including growth prevention and reactive oxygen species (ROS) response regulation. Inhibits root growth and regulates root meristems. Prevents general growth and development. Exhibits antibacterial effects against Pseudomonas syringae pv. tomato DC3000, Ralstonia solanacearum, Bacillus subtilis and Agrobacterium tumefaciens, thus being an antimicrobial peptide (AMP). The protein is Serine rich endogenous peptide 14 of Arabidopsis thaliana (Mouse-ear cress).